Here is a 415-residue protein sequence, read N- to C-terminus: Casein kinase I isoform delta (415 aa).

The 269-residue stretch at 9 to 277 folds into the Protein kinase domain; it reads YRLGRKIGSG…YLRQLFRNLF (269 aa). ATP is bound by residues 15–23 and K38; that span reads IGSGSFGDI. D128 (proton acceptor) is an active-site residue. Residues 278–364 form a centrosomal localization signal (CLS) region; that stretch reads HRQGFSYDYV…TSPRPVSGME (87 aa). A compositionally biased stretch (basic and acidic residues) spans 301–315; the sequence is ADDAERERRDREERL. Positions 301–415 are disordered; that stretch reads ADDAERERRD…SSGLQSVVHR (115 aa). The autoinhibitory stretch occupies residues 317–342; sequence HSRNPATRGLPSTASGRLRGTQEVAP. Residues S328 and S331 each carry the phosphoserine modification. The span at 347-358 shows a compositional bias: polar residues; it reads TPTSHTANTSPR. S370 bears the Phosphoserine mark. Residue R375 is modified to Omega-N-methylarginine. Residues 380–400 are compositionally biased toward polar residues; it reads NVSSSDLTGRQDTSRMSTSQI. Residues S382, S383, S384, P401, S407, and S411 each carry the phosphoserine modification.

Belongs to the protein kinase superfamily. CK1 Ser/Thr protein kinase family. Casein kinase I subfamily. Monomer. Component of the circadian core oscillator, which includes the CRY proteins, CLOCK, or NPAS2, BMAL1 or BMAL2, CSNK1D and/or CSNK1E, TIMELESS and the PER proteins. Interacts directly with PER1 and PER2 which may lead to their degradation. Interacts with MAP1A. Interacts with MAPT/TAU, DBNDD2, AIB1/NCOA3 and ESR1. Interacts with AKAP9/AKAP450; this interaction promotes centrosomal subcellular location. Binds to tubulins in mitotic cells upon DNA damage. Interacts with GJA1. Interacts with SNAPIN. Interacts with DNMT1. Interacts with DDX3X; this interaction enhances CSNK1D kinase activity in vitro, but it is unclear whether this interaction is physiologically relevant. Interacts with FAM83A, FAM83B, FAM83E and FAM83H (via DUF1669). Post-translationally, autophosphorylated on serine and threonine residues; this autophosphorylation represses activity. Reactivated by phosphatase-mediated dephosphorylation. May be dephosphorylated by PP1. As to expression, expressed ubiquitously. However, kinase activity is not uniform, with highest kinase activity in splenocytes.

It localises to the cytoplasm. Its subcellular location is the nucleus. The protein localises to the cytoskeleton. It is found in the microtubule organizing center. The protein resides in the centrosome. It localises to the perinuclear region. Its subcellular location is the cell membrane. The protein localises to the spindle. It is found in the golgi apparatus. It carries out the reaction L-seryl-[protein] + ATP = O-phospho-L-seryl-[protein] + ADP + H(+). The enzyme catalyses L-threonyl-[protein] + ATP = O-phospho-L-threonyl-[protein] + ADP + H(+). It catalyses the reaction L-seryl-[tau protein] + ATP = O-phospho-L-seryl-[tau protein] + ADP + H(+). The catalysed reaction is L-threonyl-[tau protein] + ATP = O-phospho-L-threonyl-[tau protein] + ADP + H(+). With respect to regulation, exhibits substrate-dependent heparin activation. Drug-mediated inhibition leads to a delay of the oscillations with the magnitude of this effect dependent upon the timing of drug administration. Inhibited by phosphorylation. Essential serine/threonine-protein kinase that regulates diverse cellular growth and survival processes including Wnt signaling, DNA repair and circadian rhythms. It can phosphorylate a large number of proteins. Casein kinases are operationally defined by their preferential utilization of acidic proteins such as caseins as substrates. Phosphorylates connexin-43/GJA1, MAP1A, SNAPIN, MAPT/TAU, TOP2A, DCK, HIF1A, EIF6, p53/TP53, DVL2, DVL3, ESR1, AIB1/NCOA3, DNMT1, PKD2, YAP1, PER1 and PER2. Central component of the circadian clock. In balance with PP1, determines the circadian period length through the regulation of the speed and rhythmicity of PER1 and PER2 phosphorylation. Controls PER1 and PER2 nuclear transport and degradation. YAP1 phosphorylation promotes its SCF(beta-TRCP) E3 ubiquitin ligase-mediated ubiquitination and subsequent degradation. DNMT1 phosphorylation reduces its DNA-binding activity. Phosphorylation of ESR1 and AIB1/NCOA3 stimulates their activity and coactivation. Phosphorylation of DVL2 and DVL3 regulates WNT3A signaling pathway that controls neurite outgrowth. Phosphorylates NEDD9/HEF1. EIF6 phosphorylation promotes its nuclear export. Triggers down-regulation of dopamine receptors in the forebrain. Activates DCK in vitro by phosphorylation. TOP2A phosphorylation favors DNA cleavable complex formation. May regulate the formation of the mitotic spindle apparatus in extravillous trophoblast. Modulates connexin-43/GJA1 gap junction assembly by phosphorylation. Probably involved in lymphocyte physiology. Regulates fast synaptic transmission mediated by glutamate. The polypeptide is Casein kinase I isoform delta (Csnk1d) (Mus musculus (Mouse)).